The chain runs to 877 residues: ATP-dependent RNA helicase dbp7 (877 aa).

Disordered regions lie at residues 34 to 163 (AKKT…LPPG) and 225 to 251 (FNPT…APLT). Basic and acidic residues predominate over residues 50 to 73 (STREIFSERQHDTGAEEYIGREPS). The Q motif signature appears at 255–284 (ATFTNLGLSRRLAAHLSTKLDMKAPTAIQK). The Helicase ATP-binding domain occupies 288-484 (TQLISDDSDA…EISLKDAVHI (197 aa)). 301–308 (AETGSGKT) contacts ATP. Residues 417-420 (DEGD) carry the DEAD box motif. Residues 512 to 719 (QLKQSYAIVP…LTHHTAEDLI (208 aa)) enclose the Helicase C-terminal domain. The segment at 803–851 (PGLRPAKMTKADRSVAARKAKRGEKEEEKAPEGERVRKQRKMELDLPTV) is disordered. The span at 825–846 (GEKEEEKAPEGERVRKQRKMEL) shows a compositional bias: basic and acidic residues.

This sequence belongs to the DEAD box helicase family. DDX31/DBP7 subfamily.

It is found in the nucleus. The protein resides in the nucleolus. It catalyses the reaction ATP + H2O = ADP + phosphate + H(+). In terms of biological role, ATP-binding RNA helicase involved in the biogenesis of 60S ribosomal subunits and is required for the normal formation of 25S and 5.8S rRNAs. The polypeptide is ATP-dependent RNA helicase dbp7 (dbp7) (Sclerotinia sclerotiorum (strain ATCC 18683 / 1980 / Ss-1) (White mold)).